The following is a 365-amino-acid chain: UDP-N-acetylglucosamine--N-acetylmuramyl-(pentapeptide) pyrophosphoryl-undecaprenol N-acetylglucosamine transferase (365 aa).

UDP-N-acetyl-alpha-D-glucosamine contacts are provided by residues T20–G22, N132, R168, S196, I253, and Q298.

This sequence belongs to the glycosyltransferase 28 family. MurG subfamily.

Its subcellular location is the cell inner membrane. It catalyses the reaction di-trans,octa-cis-undecaprenyl diphospho-N-acetyl-alpha-D-muramoyl-L-alanyl-D-glutamyl-meso-2,6-diaminopimeloyl-D-alanyl-D-alanine + UDP-N-acetyl-alpha-D-glucosamine = di-trans,octa-cis-undecaprenyl diphospho-[N-acetyl-alpha-D-glucosaminyl-(1-&gt;4)]-N-acetyl-alpha-D-muramoyl-L-alanyl-D-glutamyl-meso-2,6-diaminopimeloyl-D-alanyl-D-alanine + UDP + H(+). It participates in cell wall biogenesis; peptidoglycan biosynthesis. Functionally, cell wall formation. Catalyzes the transfer of a GlcNAc subunit on undecaprenyl-pyrophosphoryl-MurNAc-pentapeptide (lipid intermediate I) to form undecaprenyl-pyrophosphoryl-MurNAc-(pentapeptide)GlcNAc (lipid intermediate II). The polypeptide is UDP-N-acetylglucosamine--N-acetylmuramyl-(pentapeptide) pyrophosphoryl-undecaprenol N-acetylglucosamine transferase (Ralstonia nicotianae (strain ATCC BAA-1114 / GMI1000) (Ralstonia solanacearum)).